The chain runs to 404 residues: MANIVVKKLERTPIDETPVEIVERKGIGHPDSICDGIAESVSVALCKMYKEKLGVVLHHNTDQVELVGGYAYPKLGGGCMINPIYVLLSGRATAEVLDKETGKIVKLPVNTTAVNAAREYLKKALRNIDLEKDVVVDCRIGQGSVDLVEVFDRKRSEIPHANDTSFGVGHAPLSTTEKIVLETEKLLNSAELKAIVPGVGEDIKVMGLREGKKITLTIAMAVVDKYADSLEEYEKVKEMAHKKVVENAQKYLNGHELEVFINTADDEECIFLTVTGTSAEMGDDGSVGRGNRANGLITPFRPMSMEATSGKNPINHIGKIYNILSNIIASDVAELEEVKECQIRILSQIGKPITEPKILSIEVIPENGFTLDDVTKKATEVAEKWLDNIQNVTEKIVEGKVTTF.

141–146 provides a ligand contact to ATP; the sequence is GQGSVD.

This sequence belongs to the AdoMet synthase 2 family. It depends on Mg(2+) as a cofactor.

The enzyme catalyses L-methionine + ATP + H2O = S-adenosyl-L-methionine + phosphate + diphosphate. The protein operates within amino-acid biosynthesis; S-adenosyl-L-methionine biosynthesis; S-adenosyl-L-methionine from L-methionine: step 1/1. Functionally, catalyzes the formation of S-adenosylmethionine from methionine and ATP. This Methanococcus vannielii (strain ATCC 35089 / DSM 1224 / JCM 13029 / OCM 148 / SB) protein is S-adenosylmethionine synthase.